The sequence spans 155 residues: Protein-export protein SecB (155 aa).

Belongs to the SecB family. Homotetramer, a dimer of dimers. One homotetramer interacts with 1 SecA dimer.

Its subcellular location is the cytoplasm. Its function is as follows. One of the proteins required for the normal export of preproteins out of the cell cytoplasm. It is a molecular chaperone that binds to a subset of precursor proteins, maintaining them in a translocation-competent state. It also specifically binds to its receptor SecA. The chain is Protein-export protein SecB from Methylococcus capsulatus (strain ATCC 33009 / NCIMB 11132 / Bath).